A 633-amino-acid chain; its full sequence is Polypeptide N-acetylgalactosaminyltransferase 3 (633 aa).

Residues 1 to 19 (MAHLKRLVKLHIKRHYHKK) are Cytoplasmic-facing. A helical; Signal-anchor for type II membrane protein membrane pass occupies residues 20–37 (FWKLGAVIFFFIIVLVLM). The Lumenal portion of the chain corresponds to 38 to 633 (QREVSVQYSK…LQKWILSQND (596 aa)). The N-linked (GlcNAc...) asparagine glycan is linked to N132. Residues 184–293 (LPTTSVIIVF…YGWLEPLLAR (110 aa)) form a catalytic subdomain A region. The Mn(2+) site is built by D277 and H279. N-linked (GlcNAc...) asparagine glycosylation occurs at N297. A catalytic subdomain B region spans residues 356–418 (PIKTPTFAGG…PCSVVGHVFR (63 aa)). H415 contributes to the Mn(2+) binding site. A glycan (N-linked (GlcNAc...) asparagine) is linked at N484. Positions 504–630 (VISGYIKSVG…SDPLQKWILS (127 aa)) constitute a Ricin B-type lectin domain. An intrachain disulfide couples C517 to C535. UDP-N-acetyl-alpha-D-galactosamine is bound by residues D519, E522, H536, and N541. Intrachain disulfides connect C561–C574 and C605–C618.

Belongs to the glycosyltransferase 2 family. GalNAc-T subfamily. It depends on Mn(2+) as a cofactor. As to expression, expressed in organs that contain secretory epithelial glands. Highly expressed in pancreas, skin, kidney and testis. Weakly expressed in prostate, ovary, intestine and colon. Also expressed in placenta and lung and fetal lung and fetal kidney.

The protein resides in the golgi apparatus. Its subcellular location is the golgi stack membrane. The enzyme catalyses L-seryl-[protein] + UDP-N-acetyl-alpha-D-galactosamine = a 3-O-[N-acetyl-alpha-D-galactosaminyl]-L-seryl-[protein] + UDP + H(+). It catalyses the reaction L-threonyl-[protein] + UDP-N-acetyl-alpha-D-galactosamine = a 3-O-[N-acetyl-alpha-D-galactosaminyl]-L-threonyl-[protein] + UDP + H(+). It participates in protein modification; protein glycosylation. In terms of biological role, catalyzes the initial reaction in O-linked oligosaccharide biosynthesis, the transfer of an N-acetyl-D-galactosamine residue to a serine or threonine residue on the protein receptor. Has activity toward HIV envelope glycoprotein gp120, EA2, MUC2, MUC1A and MUC5AC. Probably glycosylates fibronectin in vivo. Glycosylates FGF23. The polypeptide is Polypeptide N-acetylgalactosaminyltransferase 3 (GALNT3) (Homo sapiens (Human)).